Here is a 367-residue protein sequence, read N- to C-terminus: UDP-N-acetylglucosamine--N-acetylmuramyl-(pentapeptide) pyrophosphoryl-undecaprenol N-acetylglucosamine transferase (367 aa).

UDP-N-acetyl-alpha-D-glucosamine contacts are provided by residues 10–12, N124, S196, and Q300; that span reads TGG.

It belongs to the glycosyltransferase 28 family. MurG subfamily.

The protein localises to the cell membrane. The catalysed reaction is di-trans,octa-cis-undecaprenyl diphospho-N-acetyl-alpha-D-muramoyl-L-alanyl-D-glutamyl-meso-2,6-diaminopimeloyl-D-alanyl-D-alanine + UDP-N-acetyl-alpha-D-glucosamine = di-trans,octa-cis-undecaprenyl diphospho-[N-acetyl-alpha-D-glucosaminyl-(1-&gt;4)]-N-acetyl-alpha-D-muramoyl-L-alanyl-D-glutamyl-meso-2,6-diaminopimeloyl-D-alanyl-D-alanine + UDP + H(+). The protein operates within cell wall biogenesis; peptidoglycan biosynthesis. Cell wall formation. Catalyzes the transfer of a GlcNAc subunit on undecaprenyl-pyrophosphoryl-MurNAc-pentapeptide (lipid intermediate I) to form undecaprenyl-pyrophosphoryl-MurNAc-(pentapeptide)GlcNAc (lipid intermediate II). The protein is UDP-N-acetylglucosamine--N-acetylmuramyl-(pentapeptide) pyrophosphoryl-undecaprenol N-acetylglucosamine transferase of Natranaerobius thermophilus (strain ATCC BAA-1301 / DSM 18059 / JW/NM-WN-LF).